Here is a 184-residue protein sequence, read N- to C-terminus: Alpha-tubulin N-acetyltransferase (184 aa).

Positions 1-170 (METFNHIDIK…NHFVIFSNYF (170 aa)) constitute an N-acetyltransferase domain. Acetyl-CoA is bound by residues 104–117 (FYIL…GLGI) and 140–149 (SYKLQNFLKK).

It belongs to the acetyltransferase ATAT1 family.

It carries out the reaction L-lysyl-[alpha-tubulin] + acetyl-CoA = N(6)-acetyl-L-lysyl-[alpha-tubulin] + CoA + H(+). In terms of biological role, specifically acetylates 'Lys-40' in alpha-tubulin on the lumenal side of microtubules. Promotes microtubule destabilization and accelerates microtubule dynamics; this activity may be independent of acetylation activity. Acetylates alpha-tubulin with a slow enzymatic rate, due to a catalytic site that is not optimized for acetyl transfer. Enters the microtubule through each end and diffuses quickly throughout the lumen of microtubules. Acetylates only long/old microtubules because of its slow acetylation rate since it does not have time to act on dynamically unstable microtubules before the enzyme is released. This Plasmodium falciparum (isolate 3D7) protein is Alpha-tubulin N-acetyltransferase.